The chain runs to 409 residues: tRNA-specific 2-thiouridylase MnmA (409 aa).

ATP is bound by residues 40–47 (GLSGGVDS) and Leu-66. The active-site Nucleophile is Cys-127. A disulfide bridge connects residues Cys-127 and Cys-237. Gly-152 lines the ATP pocket. An interaction with tRNA region spans residues 187–189 (KDQ). The active-site Cysteine persulfide intermediate is Cys-237. The tract at residues 342-343 (RY) is interaction with tRNA.

The protein belongs to the MnmA/TRMU family.

It is found in the cytoplasm. The catalysed reaction is S-sulfanyl-L-cysteinyl-[protein] + uridine(34) in tRNA + AH2 + ATP = 2-thiouridine(34) in tRNA + L-cysteinyl-[protein] + A + AMP + diphosphate + H(+). Functionally, catalyzes the 2-thiolation of uridine at the wobble position (U34) of tRNA, leading to the formation of s(2)U34. The polypeptide is tRNA-specific 2-thiouridylase MnmA (Prochlorococcus marinus (strain MIT 9313)).